Reading from the N-terminus, the 328-residue chain is MTNQRTTRDGSHGTESVPTQRSRESTDEDHGCPECNGDLVTDEDRGETTCGECGLVVEEDGIDHGPEWRAFNAQEQDEKSRVGAPTTNMMHDKGLSTNIGWQDKDAYGNTLSGRQRRKMQRLRKWNERFRTRNSKERNLKQALGEIERMASAFGLPDSVRETASVIYRRALGEDLLPGRSIEGVATSALYAAARQANTPRSLDEVASVSRVDRGEIARTYRYVARELSLEVAPTDPASYVPRFCSDLELSGDVERRARDLLAAAADAGITSGKSPVGLAAASVYAAALLTNERVTQNEVSTVANVSEVTIRNRYHEILDAGGEPGVEA.

Composition is skewed to basic and acidic residues over residues 1–12 (MTNQRTTRDGSH) and 21–32 (RSRESTDEDHGC). A disordered region spans residues 1–47 (MTNQRTTRDGSHGTESVPTQRSRESTDEDHGCPECNGDLVTDEDRGE). A TFIIB-type zinc finger spans residues 28-58 (EDHGCPECNGDLVTDEDRGETTCGECGLVVE). Zn(2+) contacts are provided by C32, C35, C50, and C53. A run of 2 repeats spans residues 144 to 227 (GEIE…AREL) and 238 to 319 (SYVP…EILD).

Belongs to the TFIIB family.

Its function is as follows. Stabilizes TBP binding to an archaeal box-A promoter. Also responsible for recruiting RNA polymerase II to the pre-initiation complex (DNA-TBP-TFIIB). In Halobacterium salinarum (strain ATCC 700922 / JCM 11081 / NRC-1) (Halobacterium halobium), this protein is Transcription initiation factor IIB 4.